A 246-amino-acid polypeptide reads, in one-letter code: Pyridoxine 5'-phosphate synthase (246 aa).

Asparagine 12 serves as a coordination point for 3-amino-2-oxopropyl phosphate. 14-15 (DH) contacts 1-deoxy-D-xylulose 5-phosphate. 3-amino-2-oxopropyl phosphate is bound at residue arginine 23. Catalysis depends on histidine 48, which acts as the Proton acceptor. 2 residues coordinate 1-deoxy-D-xylulose 5-phosphate: arginine 50 and histidine 55. Glutamate 75 functions as the Proton acceptor in the catalytic mechanism. Threonine 105 contributes to the 1-deoxy-D-xylulose 5-phosphate binding site. Catalysis depends on histidine 196, which acts as the Proton donor. 3-amino-2-oxopropyl phosphate-binding positions include glycine 197 and 218–219 (GH).

It belongs to the PNP synthase family. In terms of assembly, homooctamer; tetramer of dimers.

It localises to the cytoplasm. It carries out the reaction 3-amino-2-oxopropyl phosphate + 1-deoxy-D-xylulose 5-phosphate = pyridoxine 5'-phosphate + phosphate + 2 H2O + H(+). The protein operates within cofactor biosynthesis; pyridoxine 5'-phosphate biosynthesis; pyridoxine 5'-phosphate from D-erythrose 4-phosphate: step 5/5. Catalyzes the complicated ring closure reaction between the two acyclic compounds 1-deoxy-D-xylulose-5-phosphate (DXP) and 3-amino-2-oxopropyl phosphate (1-amino-acetone-3-phosphate or AAP) to form pyridoxine 5'-phosphate (PNP) and inorganic phosphate. The polypeptide is Pyridoxine 5'-phosphate synthase (Thioalkalivibrio sulfidiphilus (strain HL-EbGR7)).